A 212-amino-acid polypeptide reads, in one-letter code: ATP-dependent Clp protease proteolytic subunit (212 aa).

The Nucleophile role is filled by serine 114. Histidine 139 is a catalytic residue.

Belongs to the peptidase S14 family. Fourteen ClpP subunits assemble into 2 heptameric rings which stack back to back to give a disk-like structure with a central cavity, resembling the structure of eukaryotic proteasomes.

The protein resides in the cytoplasm. It carries out the reaction Hydrolysis of proteins to small peptides in the presence of ATP and magnesium. alpha-casein is the usual test substrate. In the absence of ATP, only oligopeptides shorter than five residues are hydrolyzed (such as succinyl-Leu-Tyr-|-NHMec, and Leu-Tyr-Leu-|-Tyr-Trp, in which cleavage of the -Tyr-|-Leu- and -Tyr-|-Trp bonds also occurs).. Functionally, cleaves peptides in various proteins in a process that requires ATP hydrolysis. Has a chymotrypsin-like activity. Plays a major role in the degradation of misfolded proteins. The chain is ATP-dependent Clp protease proteolytic subunit from Azoarcus sp. (strain BH72).